A 361-amino-acid chain; its full sequence is Phosphoserine aminotransferase (361 aa).

R43 is an L-glutamate binding site. Pyridoxal 5'-phosphate is bound by residues 77 to 78 (AS), W103, T152, D172, and Q195. K196 bears the N6-(pyridoxal phosphate)lysine mark. 237–238 (NT) serves as a coordination point for pyridoxal 5'-phosphate.

It belongs to the class-V pyridoxal-phosphate-dependent aminotransferase family. SerC subfamily. As to quaternary structure, homodimer. Pyridoxal 5'-phosphate serves as cofactor.

It localises to the cytoplasm. It carries out the reaction O-phospho-L-serine + 2-oxoglutarate = 3-phosphooxypyruvate + L-glutamate. The catalysed reaction is 4-(phosphooxy)-L-threonine + 2-oxoglutarate = (R)-3-hydroxy-2-oxo-4-phosphooxybutanoate + L-glutamate. It functions in the pathway amino-acid biosynthesis; L-serine biosynthesis; L-serine from 3-phospho-D-glycerate: step 2/3. It participates in cofactor biosynthesis; pyridoxine 5'-phosphate biosynthesis; pyridoxine 5'-phosphate from D-erythrose 4-phosphate: step 3/5. In terms of biological role, catalyzes the reversible conversion of 3-phosphohydroxypyruvate to phosphoserine and of 3-hydroxy-2-oxo-4-phosphonooxybutanoate to phosphohydroxythreonine. The polypeptide is Phosphoserine aminotransferase (Desulfosudis oleivorans (strain DSM 6200 / JCM 39069 / Hxd3) (Desulfococcus oleovorans)).